The primary structure comprises 206 residues: Thymidylate kinase (206 aa).

11 to 18 (GIDGAGKT) lines the ATP pocket.

The protein belongs to the thymidylate kinase family.

It carries out the reaction dTMP + ATP = dTDP + ADP. Its function is as follows. Phosphorylation of dTMP to form dTDP in both de novo and salvage pathways of dTTP synthesis. This chain is Thymidylate kinase, found in Burkholderia cenocepacia (strain ATCC BAA-245 / DSM 16553 / LMG 16656 / NCTC 13227 / J2315 / CF5610) (Burkholderia cepacia (strain J2315)).